We begin with the raw amino-acid sequence, 394 residues long: MAKAKFERTKPHVNIGTIGHVDHGKTSLTAAITIVLAKTGGAKATAYDQIDAAPEEKERGITISTAHVEYETKNRHYAHVDCPGHADYVKNMITGAAQMDGAILVVSAADGPMPQTREHILLAKQVGVPAMVVFLNKVDMVDDPDLLELVEMEVRELLSKYGFPGDEIPIIKGSALQALEGKPEGEKAINELMDAVDSYIPQPVRATDKLFLMPIEDVFSISGRGTVVTGRVESGIIKLGEEIEIVGLKDTQKTTCTGVEMFRKLLDEGQAGDNVGILLRGTKREEVERGQVLAKPGSIKPHDKFEAEVYVLSKEEGGRHTPFTNDYRPQFYFRTTDVTGTIKLPADKQMVMPGDNATFTVELIKPIAMQEGLKFSIREGGRTVGAGVVTKINN.

The 195-residue stretch at 10–204 folds into the tr-type G domain; it reads KPHVNIGTIG…AVDSYIPQPV (195 aa). The tract at residues 19–26 is G1; that stretch reads GHVDHGKT. 19–26 contacts GTP; the sequence is GHVDHGKT. Thr26 is a binding site for Mg(2+). The interval 60–64 is G2; sequence GITIS. The G3 stretch occupies residues 81-84; it reads DCPG. Residues 81–85 and 136–139 each bind GTP; these read DCPGH and NKVD. The segment at 136 to 139 is G4; it reads NKVD. The G5 stretch occupies residues 174–176; it reads SAL.

Belongs to the TRAFAC class translation factor GTPase superfamily. Classic translation factor GTPase family. EF-Tu/EF-1A subfamily. Monomer.

It localises to the cytoplasm. It carries out the reaction GTP + H2O = GDP + phosphate + H(+). Functionally, GTP hydrolase that promotes the GTP-dependent binding of aminoacyl-tRNA to the A-site of ribosomes during protein biosynthesis. The chain is Elongation factor Tu from Rickettsia felis (strain ATCC VR-1525 / URRWXCal2) (Rickettsia azadi).